The chain runs to 31 residues: Cytochrome b6-f complex subunit 6 (31 aa).

Residues 4–24 traverse the membrane as a helical segment; it reads VIAYLGLLASVLIGTIVIYLG.

This sequence belongs to the PetL family. In terms of assembly, the 4 large subunits of the cytochrome b6-f complex are cytochrome b6, subunit IV (17 kDa polypeptide, PetD), cytochrome f and the Rieske protein, while the 4 small subunits are PetG, PetL, PetM and PetN. The complex functions as a dimer.

Its subcellular location is the plastid. It localises to the chloroplast thylakoid membrane. In terms of biological role, component of the cytochrome b6-f complex, which mediates electron transfer between photosystem II (PSII) and photosystem I (PSI), cyclic electron flow around PSI, and state transitions. PetL is important for photoautotrophic growth as well as for electron transfer efficiency and stability of the cytochrome b6-f complex. This is Cytochrome b6-f complex subunit 6 from Oltmannsiellopsis viridis (Marine flagellate).